Here is an 881-residue protein sequence, read N- to C-terminus: Beta-mannosidase (881 aa).

An N-terminal signal peptide occupies residues methionine 1–alanine 18. Asparagine 35, asparagine 77, asparagine 89, and asparagine 113 each carry an N-linked (GlcNAc...) asparagine glycan. A disulfide bridge links cysteine 167 with cysteine 176. Tryptophan 190–tryptophan 192 contacts substrate. Residues asparagine 226, asparagine 297, and asparagine 302 are each glycosylated (N-linked (GlcNAc...) asparagine). A substrate-binding site is contributed by asparagine 456. Glutamate 457 serves as the catalytic Proton donor. Cystine bridges form between cysteine 540/cysteine 629, cysteine 732/cysteine 761, and cysteine 764/cysteine 769. Residue glutamate 554 is the Nucleophile of the active site. Asparagine 803 carries an N-linked (GlcNAc...) asparagine glycan.

Belongs to the glycosyl hydrolase 2 family. As to quaternary structure, monomer.

The protein resides in the lysosome. The enzyme catalyses Hydrolysis of terminal, non-reducing beta-D-mannose residues in beta-D-mannosides.. It participates in glycan metabolism; N-glycan degradation. Exoglycosidase that cleaves the single beta-linked mannose residue from the non-reducing end of all N-linked glycoprotein oligosaccharides. The sequence is that of Beta-mannosidase from Rattus norvegicus (Rat).